The primary structure comprises 688 residues: G protein-coupled receptor kinase 3 (688 aa).

Positions 1–190 are N-terminal; sequence MADLEAVLAD…ELNIHLSMND (190 aa). Positions 54–175 constitute an RGS domain; that stretch reads TFDKIFNQKI…MESEKFTRFC (122 aa). The Protein kinase domain occupies 191 to 453; that stretch reads FSVHRIIGRG…ARELKEHIFF (263 aa). ATP contacts are provided by residues 197 to 205 and Lys220; that span reads IGRGGFGEV. The active-site Proton acceptor is the Asp317. Positions 454–521 constitute an AGC-kinase C-terminal domain; that stretch reads KGIDWQYVYL…MISERWQQEV (68 aa). One can recognise a PH domain in the interval 558 to 652; that stretch reads DCIMHGYMLK…WLKELTCTFN (95 aa).

This sequence belongs to the protein kinase superfamily. AGC Ser/Thr protein kinase family. GPRK subfamily. Interacts with GIT1. Post-translationally, ubiquitinated. In terms of tissue distribution, expressed in brain cortex, hippocampus, striatum, hypothalamus, cerebellum and brainstem (at protein level).

It localises to the postsynapse. Its subcellular location is the presynapse. It catalyses the reaction [beta-adrenergic receptor] + ATP = [beta-adrenergic receptor]-phosphate + ADP + H(+). Functionally, specifically phosphorylates the agonist-occupied form of the beta-adrenergic and closely related receptors. This Rattus norvegicus (Rat) protein is G protein-coupled receptor kinase 3.